Consider the following 298-residue polypeptide: HTH-type transcriptional regulator TsaR (298 aa).

Residues M1–T58 enclose the HTH lysR-type domain. Residues L18 to Q37 constitute a DNA-binding region (H-T-H motif). Residues S98 and A100 each coordinate toluene-4-sulfonate.

It belongs to the LysR transcriptional regulatory family. As to quaternary structure, homotetramer. Dimer of dimers related by a twofold axis.

Its activity is regulated as follows. Sensitive to oxygen. In terms of biological role, regulates expression of the tsaMBCD1 operon and of tsaT in response to p-toluenesulfonate (TSA). Acts by binding directly to the promoter region. Binding to the tsa promoter depends on TSA concentration. The protein is HTH-type transcriptional regulator TsaR (tsaR) of Comamonas testosteroni (Pseudomonas testosteroni).